The sequence spans 469 residues: Ubiquitin carboxyl-terminal hydrolase MINDY-1 (469 aa).

The segment at Met-1–Leu-85 is disordered. A compositionally biased stretch (basic and acidic residues) spans His-34 to Ala-53. Ser-103 carries the post-translational modification Phosphoserine. The active-site Nucleophile is Cys-137. The active-site Proton acceptor is His-319. Residues Gln-388 to Gln-426 are ubiquitin-binding domain (UBD). The tract at residues Gln-428–Leu-469 is disordered. A Phosphoserine modification is found at Ser-441. Residues Ala-453 to Leu-469 are compositionally biased toward basic and acidic residues.

Belongs to the MINDY deubiquitinase family. FAM63 subfamily.

It carries out the reaction Thiol-dependent hydrolysis of ester, thioester, amide, peptide and isopeptide bonds formed by the C-terminal Gly of ubiquitin (a 76-residue protein attached to proteins as an intracellular targeting signal).. Hydrolase that can specifically remove 'Lys-48'-linked conjugated ubiquitin from proteins. Has exodeubiquitinase activity and has a preference for long polyubiquitin chains. May play a regulatory role at the level of protein turnover. This is Ubiquitin carboxyl-terminal hydrolase MINDY-1 (MINDY1) from Pongo abelii (Sumatran orangutan).